Reading from the N-terminus, the 156-residue chain is Transcription elongation factor GreA 1 (156 aa).

Residues 43–74 (RSENAEYSSAKRDLGRLESRLRYLNKQLQYAQ) adopt a coiled-coil conformation.

The protein belongs to the GreA/GreB family.

Its function is as follows. Necessary for efficient RNA polymerase transcription elongation past template-encoded arresting sites. The arresting sites in DNA have the property of trapping a certain fraction of elongating RNA polymerases that pass through, resulting in locked ternary complexes. Cleavage of the nascent transcript by cleavage factors such as GreA or GreB allows the resumption of elongation from the new 3'terminus. GreA releases sequences of 2 to 3 nucleotides. This is Transcription elongation factor GreA 1 from Lactiplantibacillus plantarum (strain ATCC BAA-793 / NCIMB 8826 / WCFS1) (Lactobacillus plantarum).